Consider the following 223-residue polypeptide: Urease accessory protein UreF (223 aa).

The protein belongs to the UreF family. UreD, UreF and UreG form a complex that acts as a GTP-hydrolysis-dependent molecular chaperone, activating the urease apoprotein by helping to assemble the nickel containing metallocenter of UreC. The UreE protein probably delivers the nickel.

It is found in the cytoplasm. Its function is as follows. Required for maturation of urease via the functional incorporation of the urease nickel metallocenter. This Agrobacterium fabrum (strain C58 / ATCC 33970) (Agrobacterium tumefaciens (strain C58)) protein is Urease accessory protein UreF.